A 271-amino-acid chain; its full sequence is Oxamate carbamoyltransferase subunit AllH (271 aa).

This sequence belongs to the AllH family. In terms of assembly, the OXTCase is composed of 3 subunits, AllF, AllG and AllH. It depends on Mg(2+) as a cofactor.

It carries out the reaction oxamate + carbamoyl phosphate = N-carbamoyl-2-oxoglycine + phosphate. It functions in the pathway nitrogen metabolism; (S)-allantoin degradation. Its function is as follows. Component of a carbamoyltransferase involved in the anaerobic nitrogen utilization via the assimilation of allantoin. Catalyzes the conversion of oxalurate (N-carbamoyl-2-oxoglycine) to oxamate and carbamoyl phosphate. The sequence is that of Oxamate carbamoyltransferase subunit AllH from Escherichia coli O157:H7.